The sequence spans 541 residues: Membrane protein insertase YidC (541 aa).

The next 5 membrane-spanning stretches (helical) occupy residues 7 to 27 (LFLV…QTDH), 340 to 360 (QLIH…TFIV), 415 to 435 (LGGC…YYML), 453 to 473 (LAAP…MFFI), and 494 to 514 (PVIF…YYIV).

It belongs to the OXA1/ALB3/YidC family. Type 1 subfamily. In terms of assembly, interacts with the Sec translocase complex via SecD. Specifically interacts with transmembrane segments of nascent integral membrane proteins during membrane integration.

It is found in the cell inner membrane. In terms of biological role, required for the insertion and/or proper folding and/or complex formation of integral membrane proteins into the membrane. Involved in integration of membrane proteins that insert both dependently and independently of the Sec translocase complex, as well as at least some lipoproteins. Aids folding of multispanning membrane proteins. The polypeptide is Membrane protein insertase YidC (Edwardsiella ictaluri (strain 93-146)).